A 497-amino-acid chain; its full sequence is Probable cytosol aminopeptidase (497 aa).

Residues Lys263 and Asp268 each contribute to the Mn(2+) site. Lys275 is an active-site residue. 3 residues coordinate Mn(2+): Asp286, Asp345, and Glu347. Arg349 is a catalytic residue.

The protein belongs to the peptidase M17 family. The cofactor is Mn(2+).

The protein localises to the cytoplasm. It catalyses the reaction Release of an N-terminal amino acid, Xaa-|-Yaa-, in which Xaa is preferably Leu, but may be other amino acids including Pro although not Arg or Lys, and Yaa may be Pro. Amino acid amides and methyl esters are also readily hydrolyzed, but rates on arylamides are exceedingly low.. The enzyme catalyses Release of an N-terminal amino acid, preferentially leucine, but not glutamic or aspartic acids.. In terms of biological role, presumably involved in the processing and regular turnover of intracellular proteins. Catalyzes the removal of unsubstituted N-terminal amino acids from various peptides. The protein is Probable cytosol aminopeptidase of Sinorhizobium medicae (strain WSM419) (Ensifer medicae).